The chain runs to 148 residues: Lysozyme C (148 aa).

Residues 1-18 (MKAPLLLGLLLLSVTVQG) form the signal peptide. Residues 19-148 (KVFERCDLAR…VSQYVRNCGV (130 aa)) form the C-type lysozyme domain. 4 cysteine pairs are disulfide-bonded: Cys24-Cys146, Cys48-Cys134, Cys83-Cys99, and Cys95-Cys113. Active-site residues include Glu53 and Asp71.

It belongs to the glycosyl hydrolase 22 family. In terms of assembly, monomer.

The protein localises to the secreted. The catalysed reaction is Hydrolysis of (1-&gt;4)-beta-linkages between N-acetylmuramic acid and N-acetyl-D-glucosamine residues in a peptidoglycan and between N-acetyl-D-glucosamine residues in chitodextrins.. Its function is as follows. Lysozymes have primarily a bacteriolytic function; those in tissues and body fluids are associated with the monocyte-macrophage system and enhance the activity of immunoagents. This is Lysozyme C (LYZ) from Leptonychotes weddellii (Weddell seal).